The sequence spans 470 residues: Nucleoporin NUP49 (470 aa).

The span at 1–13 (MSLFGTNTTSQTP) shows a compositional bias: polar residues. The disordered stretch occupies residues 1–92 (MSLFGTNTTS…STTTTTSQPQ (92 aa)). GLFG repeat units follow at residues 17-20 (GLFG), 45-48 (GLFG), 63-66 (GLFG), 79-82 (GLFG), 96-99 (GLFG), 111-114 (GLFG), 127-130 (GLFG), 142-145 (GLFG), 156-159 (GLFG), 168-171 (GLFG), 181-184 (GLFG), and 193-197 (GLFGQ). Residues 20–31 (GTTTSQSAQTGS) are compositionally biased toward low complexity. The span at 32-74 (LFGTATSQPQQTGGLFGSTATQTPSSQLQSTGLFGSTTATSQP) shows a compositional bias: polar residues. Low complexity predominate over residues 75 to 92 (QQTGGLFGSTTTTTSQPQ). The tract at residues 196-221 (GQSTTQPQQQQNATPGLTMGQSTNTQ) is disordered. Positions 197-206 (QSTTQPQQQQ) are enriched in low complexity. Residues 207-221 (NATPGLTMGQSTNTQ) are compositionally biased toward polar residues. Coiled coils occupy residues 239–270 (TRFN…EAVD) and 375–401 (FSKT…AHLT).

Belongs to the nucleoporin GLFG family. As to quaternary structure, component of the nuclear pore complex (NPC). NPC constitutes the exclusive means of nucleocytoplasmic transport. NPCs allow the passive diffusion of ions and small molecules and the active, nuclear transport receptor-mediated bidirectional transport of macromolecules such as proteins, RNAs, ribonucleoparticles (RNPs), and ribosomal subunits across the nuclear envelope. Due to its 8-fold rotational symmetry, all subunits are present with 8 copies or multiples thereof.

The protein localises to the nucleus. It is found in the nuclear pore complex. Its subcellular location is the nucleus membrane. In terms of biological role, functions as a component of the nuclear pore complex (NPC). NPC components, collectively referred to as nucleoporins (NUPs), can play the role of both NPC structural components and of docking or interaction partners for transiently associated nuclear transport factors. Active directional transport is assured by both, a Phe-Gly (FG) repeat affinity gradient for these transport factors across the NPC and a transport cofactor concentration gradient across the nuclear envelope (GSP1 and GSP2 GTPases associated predominantly with GTP in the nucleus, with GDP in the cytoplasm). NUP49 plays an important role in several nuclear transport pathways including poly(A)+ RNA, tRNA, and pre-ribosome transport. The polypeptide is Nucleoporin NUP49 (NUP49) (Chaetomium thermophilum (strain DSM 1495 / CBS 144.50 / IMI 039719) (Thermochaetoides thermophila)).